The sequence spans 103 residues: Viscotoxin-B (103 aa).

Residues phenylalanine 1–serine 6 form the signal peptide. 3 disulfide bridges follow: cysteine 9–cysteine 46, cysteine 10–cysteine 38, and cysteine 22–cysteine 32. The propeptide at phenylalanine 53–aspartate 103 is acidic domain.

This sequence belongs to the plant thionin (TC 1.C.44) family.

It localises to the secreted. Its function is as follows. Thionins are small plant proteins which are toxic to animal cells. They seem to exert their toxic effect at the level of the cell membrane. Their precise function is not known. The protein is Viscotoxin-B (THI2.2) of Viscum album (European mistletoe).